Consider the following 198-residue polypeptide: MKKLKGLFLSLLLWVYPLKSEPINEGAYILEEIGDVLRFLPIFVGTVSLAMRDYRGLGELAVGTLVTQGVIYGLKGAFSTAHKDGARVGFAKRPCCNSWRGMPSGHAGGAFSAAGFVYYRYGWKPALPVIALAILTDTSRVVAGQHTILQVTIGSLIAWGFAYLFTSRYKPKRWMLYPEISSDFKGSSRYGVGFSYQW.

A helical transmembrane segment spans residues 143–165 (AGQHTILQVTIGSLIAWGFAYLF).

This sequence belongs to the lipid A LpxF 4'-phosphatase family.

It is found in the cell inner membrane. Its pathway is bacterial outer membrane biogenesis; LPS lipid A biosynthesis. Functionally, removes the 4'-phosphate group from tetra- and hexaacylated lipid A species, has no 1-phosphatase or Kdo hydrolase activity. Absence of the 4'-phosphate group renders the bacteria resistant to host-derived cationic antimicrobial peptides (CAMP), allowing it to camouflage itself from the host innate immune response, and plays a critical role in the long-term colonization of the host's stomach. The sequence is that of Lipid A 4'-phosphatase from Helicobacter pylori (strain J99 / ATCC 700824) (Campylobacter pylori J99).